The sequence spans 265 residues: Probable esterase tazC (265 aa).

Residues Ser119, Asp209, and His236 each act as charge relay system in the active site.

It belongs to the LovG family.

It participates in secondary metabolite biosynthesis. Functionally, probable esterase; part of the gene cluster that mediates the biosynthesis of azaterrilone A and other azaphilones, a class of fungal metabolites characterized by a highly oxygenated pyrano-quinone bicyclic core and exhibiting a broad range of bioactivities. The first step of the pathway begins with the non-reducing polyketide synthase tazA that assembles one acetyl-CoA starter unit, five malonyl-CoA units, and catalyzes a series of Claisen condensations, methylation, PT-mediated cyclization, and finally releases the first hexaketide precursor through the R-domain. The tazA product then undergoes reduction on its terminal ketone and the following pyran-ring formation by yet undetermined enzyme(s). Dehydration and enoyl reduction, possibly involving the trans-enoyl reductase tazE leads to the next intermediate. TazD is predicted as an acetyltransferase and might catalyze the acetylation steps leading to the synthesis of azaterrilone A. Azaterrilone A is not the final product of the taz pathway and both the highly reducing polyketide synthase tazB and the dual enzyme tazHJ catalyze late steps of the pathway, leading to the production of the 2 final stereoisomers that contain additional polyketide modification whose structures have still to be determined. The chain is Probable esterase tazC from Aspergillus terreus (strain NIH 2624 / FGSC A1156).